The primary structure comprises 133 residues: Fluoride-specific ion channel FluC (133 aa).

The next 4 membrane-spanning stretches (helical) occupy residues 12–32, 41–61, 76–96, and 104–124; these read LAMTGGALGSGLRFAIGASLI, WGTLTVNLLGSFVAGVLLVWL, IVGVIGGLTTFSSLMMECLVF, and MIGIYLAVTLLAGLALVFAGA. Residues Gly-81 and Thr-84 each contribute to the Na(+) site.

The protein belongs to the fluoride channel Fluc/FEX (TC 1.A.43) family.

Its subcellular location is the cell inner membrane. It carries out the reaction fluoride(in) = fluoride(out). Na(+) is not transported, but it plays an essential structural role and its presence is essential for fluoride channel function. Functionally, fluoride-specific ion channel. Important for reducing fluoride concentration in the cell, thus reducing its toxicity. This is Fluoride-specific ion channel FluC from Xanthomonas axonopodis pv. citri (strain 306).